A 245-amino-acid polypeptide reads, in one-letter code: Ureidoacrylate amidohydrolase RutB (245 aa).

D41 acts as the Proton acceptor in catalysis. K150 is a catalytic residue. The Nucleophile role is filled by C183.

This sequence belongs to the isochorismatase family. RutB subfamily.

The catalysed reaction is (Z)-3-ureidoacrylate + H2O + H(+) = (Z)-3-aminoacrylate + NH4(+) + CO2. It catalyses the reaction (Z)-3-ureidoacrylate + H2O = (Z)-3-aminoacrylate + carbamate + H(+). It carries out the reaction (Z)-2-methylureidoacrylate + H2O + H(+) = (Z)-2-methylaminoacrylate + NH4(+) + CO2. Its function is as follows. Hydrolyzes ureidoacrylate to form aminoacrylate and carbamate. The carbamate hydrolyzes spontaneously, thereby releasing one of the nitrogen atoms of the pyrimidine ring as ammonia and one of its carbon atoms as CO2. This chain is Ureidoacrylate amidohydrolase RutB, found in Pseudomonas syringae pv. syringae (strain B728a).